A 306-amino-acid polypeptide reads, in one-letter code: Tyrosine recombinase XerC (306 aa).

The 87-residue stretch at 6–92 folds into the Core-binding (CB) domain; sequence NTLYLQTKPY…ALRQWFSYLI (87 aa). A Tyr recombinase domain is found at 113 to 292; that stretch reads RLPKNIDAEQ…DFQHLAKIYD (180 aa). Residues arginine 152, lysine 176, histidine 244, arginine 247, and histidine 270 contribute to the active site. Residue tyrosine 279 is the O-(3'-phospho-DNA)-tyrosine intermediate of the active site.

Belongs to the 'phage' integrase family. XerC subfamily. In terms of assembly, forms a cyclic heterotetrameric complex composed of two molecules of XerC and two molecules of XerD.

The protein resides in the cytoplasm. Site-specific tyrosine recombinase, which acts by catalyzing the cutting and rejoining of the recombining DNA molecules. The XerC-XerD complex is essential to convert dimers of the bacterial chromosome into monomers to permit their segregation at cell division. It also contributes to the segregational stability of plasmids. The protein is Tyrosine recombinase XerC of Actinobacillus pleuropneumoniae serotype 7 (strain AP76).